A 510-amino-acid chain; its full sequence is Cytochrome P450 monooxygenase BOT1 (510 aa).

The chain crosses the membrane as a helical span at residues 16 to 36 (PLAWAALILASFTLYSVQLVV). C454 contributes to the heme binding site. N-linked (GlcNAc...) asparagine glycosylation is present at N476.

The protein belongs to the cytochrome P450 family. Heme serves as cofactor.

Its subcellular location is the membrane. It functions in the pathway secondary metabolite biosynthesis. Cytochrome P450 monooxygenase; part of the gene cluster that mediates the biosynthesis of botrydial. Botrydial is necessary for colonization of plant tissue by the T4 strain. It is a strain-dependent virulence factor since highly aggressive strains like SAS56 or B05 still retain substantial virulence when botrydial synthesis is impaired, since they produce also botcinic acid. The first step of botrydial biosynthesis is performed by the sesquiterpene synthase BOT2 which catalyzes the cyclization of farnesyl diphosphate (FPP) to presilphiperfolan-8-beta-ol (PSP). The cytochrome P450 monooxygenase BOT4 then catalyzes the hydroxylation at C-4 to give a probotryane intermediate. Acetylation of the hydroxyl at C-4 is carried out by the acetyltransferase BOT5, followed by the combined action of the P450 monooxygenases BOT3 and BOT1, to yield finally the glycol, via the regio- and stereospecific hydroxylations at C-10 and C-15 of the probotryane intermediates, respectively. The cleavage of the C10-C15 bond of probotryane skeleton is an intriguing and chemically important reaction, which could be mediated by some of the monooxygenases or by a combination of them. It is possible that either BOT3 or BOT1 would oxidize either the 10- or the 15-hydroxy group to the hydroperoxide derivative, which would then undergo heterolytic fragmentation to give the dialdehyde botrydial. Finally, the dehydrogenase BOT7 might be involved in the conversion of botrydial to dihydrobotrydial. In Botryotinia fuckeliana (Noble rot fungus), this protein is Cytochrome P450 monooxygenase BOT1.